The chain runs to 49 residues: U3-plectoxin-Pt1a (49 aa).

5 disulfides stabilise this stretch: C2/C16, C9/C30, C15/C41, C32/C39, and C45/C49.

Expressed by the venom gland.

Its subcellular location is the secreted. Potent toxin that may paralyze and/or kill insect pests such as H.virescens (lepidoptera), S.exigua (beet armyworm) and M.sexta (tobacco hornworm). This is U3-plectoxin-Pt1a from Plectreurys tristis (Spider).